Reading from the N-terminus, the 742-residue chain is Phosphoribosylformylglycinamidine synthase subunit PurL (742 aa).

The active site involves H54. Y57 and K96 together coordinate ATP. E98 contributes to the Mg(2+) binding site. Residues 99–102 (SHNH) and R121 contribute to the substrate site. Catalysis depends on H100, which acts as the Proton acceptor. Residue D122 participates in Mg(2+) binding. Q245 is a substrate binding site. D273 serves as a coordination point for Mg(2+). 317–319 (ESQ) contacts substrate. Residues D500 and G537 each contribute to the ATP site. Residue N538 participates in Mg(2+) binding. Substrate is bound at residue S540.

This sequence belongs to the FGAMS family. In terms of assembly, monomer. Part of the FGAM synthase complex composed of 1 PurL, 1 PurQ and 2 PurS subunits.

The protein localises to the cytoplasm. The catalysed reaction is N(2)-formyl-N(1)-(5-phospho-beta-D-ribosyl)glycinamide + L-glutamine + ATP + H2O = 2-formamido-N(1)-(5-O-phospho-beta-D-ribosyl)acetamidine + L-glutamate + ADP + phosphate + H(+). Its pathway is purine metabolism; IMP biosynthesis via de novo pathway; 5-amino-1-(5-phospho-D-ribosyl)imidazole from N(2)-formyl-N(1)-(5-phospho-D-ribosyl)glycinamide: step 1/2. In terms of biological role, part of the phosphoribosylformylglycinamidine synthase complex involved in the purines biosynthetic pathway. Catalyzes the ATP-dependent conversion of formylglycinamide ribonucleotide (FGAR) and glutamine to yield formylglycinamidine ribonucleotide (FGAM) and glutamate. The FGAM synthase complex is composed of three subunits. PurQ produces an ammonia molecule by converting glutamine to glutamate. PurL transfers the ammonia molecule to FGAR to form FGAM in an ATP-dependent manner. PurS interacts with PurQ and PurL and is thought to assist in the transfer of the ammonia molecule from PurQ to PurL. This is Phosphoribosylformylglycinamidine synthase subunit PurL from Geobacillus kaustophilus (strain HTA426).